Reading from the N-terminus, the 168-residue chain is Peptide methionine sulfoxide reductase MsrA 2 (168 aa).

The active site involves cysteine 11.

Belongs to the MsrA Met sulfoxide reductase family.

It carries out the reaction L-methionyl-[protein] + [thioredoxin]-disulfide + H2O = L-methionyl-(S)-S-oxide-[protein] + [thioredoxin]-dithiol. The enzyme catalyses [thioredoxin]-disulfide + L-methionine + H2O = L-methionine (S)-S-oxide + [thioredoxin]-dithiol. Functionally, has an important function as a repair enzyme for proteins that have been inactivated by oxidation. Catalyzes the reversible oxidation-reduction of methionine sulfoxide in proteins to methionine. The polypeptide is Peptide methionine sulfoxide reductase MsrA 2 (Rhodopirellula baltica (strain DSM 10527 / NCIMB 13988 / SH1)).